The chain runs to 1325 residues: Nephrocystin-3 (1325 aa).

A disordered region spans residues 1-20; that stretch reads MGTASSLVSPTGGEVIEDTY. Residue Gly-2 is the site of N-myristoyl glycine attachment. The stretch at 107-203 forms a coiled coil; the sequence is SMGRREAKLD…QRLQAQGIQV (97 aa). TPR repeat units lie at residues 467-500, 881-914, 916-937, 938-971, 980-1013, 1022-1055, 1088-1121, 1130-1163, 1172-1205, 1214-1247, and 1256-1289; these read TPEE…AHEL, CLLN…KGAM, TEYF…MLCL, ADLY…RETA, AQSL…SENA, AREL…RQQA, ARTL…RERV, AQSL…RRRA, AYTV…RQKS, ATAL…YEDS, and GETL…KEAE. Residues 1293-1325 form a disordered region; it reads LGGKAPSRQSSSGDTFLFKTTHSPNVFLPQGQS. Residues 1299–1325 are compositionally biased toward polar residues; that stretch reads SRQSSSGDTFLFKTTHSPNVFLPQGQS.

In terms of assembly, interacts with NPHP1 and INVS/NPHP2. Interacts (when myristoylated) with UNC119 and UNC119B; interaction is required for localization to cilium. Interacts with CEP164. Component of a complex containing at least ANKS6, INVS, NEK8 and NPHP3. ANKS6 may organize complex assembly by linking INVS and NPHP3 to NEK8 and INVS may target the complex to the proximal ciliary axoneme.

The protein localises to the cell projection. The protein resides in the cilium. In terms of biological role, required for normal ciliary development and function. Inhibits disheveled-1-induced canonical Wnt-signaling activity and may also play a role in the control of non-canonical Wnt signaling that regulates planar cell polarity. Probably acts as a molecular switch between different Wnt signaling pathways. Required for proper convergent extension cell movements. This is Nephrocystin-3 (Nphp3) from Mus musculus (Mouse).